The primary structure comprises 535 residues: Arylsulfatase G (535 aa).

An N-terminal signal peptide occupies residues 1–18 (MGWLFLKVLFLGVTFLGC). Ca(2+)-binding residues include aspartate 44, aspartate 45, and cysteine 84. Cysteine 84 serves as the catalytic Nucleophile. Cysteine 84 is modified (3-oxoalanine (Cys)). Asparagine 117 carries N-linked (GlcNAc...) asparagine glycosylation. Lysine 137 is a binding site for substrate. Residue histidine 139 is part of the active site. Substrate is bound at residue serine 162. The N-linked (GlcNAc...) asparagine glycan is linked to asparagine 215. Residue histidine 251 participates in substrate binding. Residues aspartate 302 and asparagine 303 each contribute to the Ca(2+) site. Residues asparagine 356 and asparagine 497 are each glycosylated (N-linked (GlcNAc...) asparagine).

Belongs to the sulfatase family. Ca(2+) is required as a cofactor. Post-translationally, N-glycosylated with both high mannose and complex type sugars. The conversion to 3-oxoalanine (also known as C-formylglycine, FGly), of a serine or cysteine residue in prokaryotes and of a cysteine residue in eukaryotes, is critical for catalytic activity. In terms of processing, the 63-kDa precursor undergoes proteolytic processing in two steps, yielding two fragments in the first step (apparent molecular masses of 44 and 18 kDa). In the second step, the 44-kDa fragment is processed further to the 34- and 10-kDa chains. The 10-kDa chain is a cleavage product of the 44-kDa fragment but linked to the 18-kDa chain through a disulfide bridge.

The protein localises to the lysosome. It carries out the reaction an aryl sulfate + H2O = a phenol + sulfate + H(+). It catalyses the reaction Hydrolysis of the 3-sulfate groups of the N-sulfo-D-glucosamine 3-O-sulfate units of heparin.. Functionally, displays arylsulfatase activity with pseudosubstrates at acidic pH, such as p-nitrocatechol sulfate. Catalyzes the hydrolysis of the 3-sulfate groups of the N-sulfo-D-glucosamine 3-O-sulfate units of heparin. The sequence is that of Arylsulfatase G (ARSG) from Canis lupus familiaris (Dog).